Reading from the N-terminus, the 470-residue chain is 1-aminocyclopropane-1-carboxylate synthase 9 (470 aa).

Residues glutamate 47 and tyrosine 85 each coordinate substrate. Lysine 272 carries the post-translational modification N6-(pyridoxal phosphate)lysine.

This sequence belongs to the class-I pyridoxal-phosphate-dependent aminotransferase family. In terms of assembly, homodimer and heterodimer. In vivo, the relevance of heterodimerization with other ACS enzymes is however unsure. Interacts (via its C-terminal region) with FEI1, FEI2, ETO1 and EOL1. Requires pyridoxal 5'-phosphate as cofactor. Post-translationally, may be processed at its C-terminus. Expressed in roots and siliques.

It carries out the reaction S-adenosyl-L-methionine = 1-aminocyclopropane-1-carboxylate + S-methyl-5'-thioadenosine + H(+). It participates in alkene biosynthesis; ethylene biosynthesis via S-adenosyl-L-methionine; ethylene from S-adenosyl-L-methionine: step 1/2. 1-aminocyclopropane-1-carboxylate synthase (ACS) enzymes catalyze the conversion of S-adenosyl-L-methionine (SAM) into 1-aminocyclopropane-1-carboxylate (ACC), a direct precursor of ethylene. In Arabidopsis thaliana (Mouse-ear cress), this protein is 1-aminocyclopropane-1-carboxylate synthase 9 (ACS9).